A 67-amino-acid polypeptide reads, in one-letter code: Small, acid-soluble spore protein 2 (67 aa).

The protein belongs to the alpha/beta-type SASP family.

SASP are bound to spore DNA. They are double-stranded DNA-binding proteins that cause DNA to change to an a-like conformation. They protect the DNA backbone from chemical and enzymatic cleavage and are thus involved in dormant spore's high resistance to UV light. This is Small, acid-soluble spore protein 2 (Su-2) from Sporosarcina ureae.